The sequence spans 99 residues: Beta-defensin 127 (99 aa).

The signal sequence occupies residues 1–20; that stretch reads MGLFMIIAILLFQKPTVTEQ. Cystine bridges form between C24–C53, C33–C47, and C37–C54. The propeptide occupies 66 to 99; it reads ITKPSHPKPATLALTLQDYVTIIENFPSLKTQST.

Belongs to the beta-defensin family.

The protein localises to the secreted. In terms of biological role, has antibacterial activity. In Pan troglodytes (Chimpanzee), this protein is Beta-defensin 127 (DEFB127).